A 214-amino-acid polypeptide reads, in one-letter code: Small ribosomal subunit protein uS3c (214 aa).

The region spanning Ile-39–Glu-111 is the KH type-2 domain.

This sequence belongs to the universal ribosomal protein uS3 family. Part of the 30S ribosomal subunit.

It localises to the plastid. The protein resides in the chloroplast. In Thalassiosira pseudonana (Marine diatom), this protein is Small ribosomal subunit protein uS3c (rps3).